Consider the following 262-residue polypeptide: GTP cyclohydrolase 1 type 2 homolog (262 aa).

A divalent metal cation-binding residues include His68, His69, Asp108, His226, and Glu229.

It belongs to the GTP cyclohydrolase I type 2/NIF3 family. Homohexamer.

The chain is GTP cyclohydrolase 1 type 2 homolog from Ureaplasma parvum serovar 3 (strain ATCC 700970).